The primary structure comprises 465 residues: Asparagine--tRNA ligase (465 aa).

This sequence belongs to the class-II aminoacyl-tRNA synthetase family. As to quaternary structure, homodimer.

It localises to the cytoplasm. The enzyme catalyses tRNA(Asn) + L-asparagine + ATP = L-asparaginyl-tRNA(Asn) + AMP + diphosphate + H(+). This is Asparagine--tRNA ligase from Hahella chejuensis (strain KCTC 2396).